We begin with the raw amino-acid sequence, 102 residues long: MSITLGHYLSLGAMLFALSVIGIFLNRKNLIVLLMAIELMLLAVNLNFVAFSHYLGDMAGQVFVFFILTVAAAESAIGLAILVVLFRNRSTINVDELDALKG.

The next 3 helical transmembrane spans lie at 5–25 (LGHY…GIFL), 31–51 (IVLL…FVAF), and 62–82 (VFVF…LAIL).

The protein belongs to the complex I subunit 4L family. As to quaternary structure, NDH-1 is composed of 14 different subunits. Subunits NuoA, H, J, K, L, M, N constitute the membrane sector of the complex.

It is found in the cell inner membrane. The enzyme catalyses a quinone + NADH + 5 H(+)(in) = a quinol + NAD(+) + 4 H(+)(out). Its function is as follows. NDH-1 shuttles electrons from NADH, via FMN and iron-sulfur (Fe-S) centers, to quinones in the respiratory chain. The immediate electron acceptor for the enzyme in this species is believed to be ubiquinone. Couples the redox reaction to proton translocation (for every two electrons transferred, four hydrogen ions are translocated across the cytoplasmic membrane), and thus conserves the redox energy in a proton gradient. The protein is NADH-quinone oxidoreductase subunit K of Methylibium petroleiphilum (strain ATCC BAA-1232 / LMG 22953 / PM1).